The sequence spans 444 residues: S-locus-specific glycoprotein BS29-1 (444 aa).

Positions 1 to 28 (MRGVIPNYHHSYTLLFFVILVLFPHVFS) are cleaved as a signal peptide. The region spanning 31 to 159 (TLSPNEALTI…KTTALDRFMW (129 aa)) is the Bulb-type lectin domain. N-linked (GlcNAc...) asparagine glycans are attached at residues asparagine 43, asparagine 125, asparagine 180, asparagine 243, and asparagine 396. Positions 356-437 (CGEGDGFLRM…GGQDLYLKVA (82 aa)) constitute a PAN domain. 2 cysteine pairs are disulfide-bonded: cysteine 387–cysteine 412 and cysteine 395–cysteine 397.

Stigma.

Involved in sporophytic self-incompatibility system (the inability of flowering plants to achieve self-fertilization). The protein is S-locus-specific glycoprotein BS29-1 (SLSG) of Brassica oleracea var. alboglabra (Chinese kale).